The primary structure comprises 245 residues: Myelin protein P0 (245 aa).

A signal peptide spans 1–28 (MEPSGLRTPCSLLALVLLSALVLTPTLA). The region spanning 29–143 (IEVYTDREVY…VGKSSYVHLQ (115 aa)) is the Ig-like V-type domain. Residues 29–153 (IEVYTDREVY…VQEKGPARAG (125 aa)) are Extracellular-facing. An intrachain disulfide couples cysteine 49 to cysteine 125. Residue asparagine 120 is glycosylated (N-linked (GlcNAc...) asparagine). The chain crosses the membrane as a helical span at residues 154 to 174 (LILGIIIAVALALVIVVTILI). The Cytoplasmic segment spans residues 175–245 (LLIRYCWLRR…GIGDSRKDRK (71 aa)). Basic and acidic residues-rich tracts occupy residues 199 to 208 (KLHKAKDSSK) and 224 to 245 (TRGK…KDRK). Residues 199-245 (KLHKAKDSSKRSSRQTPILYAMLDQTRGKSSEKKAKGGIGDSRKDRK) are disordered.

The protein belongs to the myelin P0 protein family.

It is found in the cell membrane. Creation of an extracellular membrane face which guides the wrapping process and ultimately compacts adjacent lamellae. The protein is Myelin protein P0 (mpz) of Xenopus laevis (African clawed frog).